Here is a 343-residue protein sequence, read N- to C-terminus: UDP-N-acetylglucosamine--N-acetylmuramyl-(pentapeptide) pyrophosphoryl-undecaprenol N-acetylglucosamine transferase (343 aa).

UDP-N-acetyl-alpha-D-glucosamine contacts are provided by residues 10-12 (TGG), asparagine 113, serine 174, and glutamine 275.

This sequence belongs to the glycosyltransferase 28 family. MurG subfamily.

It localises to the cell membrane. The enzyme catalyses di-trans,octa-cis-undecaprenyl diphospho-N-acetyl-alpha-D-muramoyl-L-alanyl-D-glutamyl-meso-2,6-diaminopimeloyl-D-alanyl-D-alanine + UDP-N-acetyl-alpha-D-glucosamine = di-trans,octa-cis-undecaprenyl diphospho-[N-acetyl-alpha-D-glucosaminyl-(1-&gt;4)]-N-acetyl-alpha-D-muramoyl-L-alanyl-D-glutamyl-meso-2,6-diaminopimeloyl-D-alanyl-D-alanine + UDP + H(+). It functions in the pathway cell wall biogenesis; peptidoglycan biosynthesis. In terms of biological role, cell wall formation. Catalyzes the transfer of a GlcNAc subunit on undecaprenyl-pyrophosphoryl-MurNAc-pentapeptide (lipid intermediate I) to form undecaprenyl-pyrophosphoryl-MurNAc-(pentapeptide)GlcNAc (lipid intermediate II). The protein is UDP-N-acetylglucosamine--N-acetylmuramyl-(pentapeptide) pyrophosphoryl-undecaprenol N-acetylglucosamine transferase of Wolbachia sp. subsp. Brugia malayi (strain TRS).